A 124-amino-acid chain; its full sequence is Putative iron-sulfur cluster insertion protein ErpA 2 (124 aa).

Residues Cys52, Cys116, and Cys118 each contribute to the iron-sulfur cluster site.

Belongs to the HesB/IscA family. As to quaternary structure, homodimer. Iron-sulfur cluster is required as a cofactor.

In terms of biological role, required for insertion of 4Fe-4S clusters. The chain is Putative iron-sulfur cluster insertion protein ErpA 2 from Burkholderia vietnamiensis (strain G4 / LMG 22486) (Burkholderia cepacia (strain R1808)).